The chain runs to 182 residues: NADH-quinone oxidoreductase subunit B (182 aa).

The [4Fe-4S] cluster site is built by Cys47, Cys48, Cys113, and Cys142.

Belongs to the complex I 20 kDa subunit family. NDH-1 is composed of 14 different subunits. Subunits NuoB, C, D, E, F, and G constitute the peripheral sector of the complex. [4Fe-4S] cluster is required as a cofactor.

It is found in the cell inner membrane. The catalysed reaction is a quinone + NADH + 5 H(+)(in) = a quinol + NAD(+) + 4 H(+)(out). Functionally, NDH-1 shuttles electrons from NADH, via FMN and iron-sulfur (Fe-S) centers, to quinones in the respiratory chain. The immediate electron acceptor for the enzyme in this species is believed to be ubiquinone. Couples the redox reaction to proton translocation (for every two electrons transferred, four hydrogen ions are translocated across the cytoplasmic membrane), and thus conserves the redox energy in a proton gradient. The polypeptide is NADH-quinone oxidoreductase subunit B (Anaeromyxobacter dehalogenans (strain 2CP-1 / ATCC BAA-258)).